The chain runs to 539 residues: uncharacterized protein (539 aa).

Disordered stretches follow at residues 179 to 203 and 433 to 459; these read SDEL…HSHG and AQAS…HRDE. The segment covering 182–192 has biased composition (acidic residues); that stretch reads LLPDTGEDSDE. The segment covering 433-442 has biased composition (low complexity); the sequence is AQASARAQAR. Basic residues predominate over residues 443–455; that stretch reads AARRGRSAAKARG.

Belongs to the mycobacterial PPE family.

The protein resides in the secreted. This is an uncharacterized protein from Mycobacterium tuberculosis (strain CDC 1551 / Oshkosh).